The chain runs to 122 residues: Glucagon-2 (122 aa).

An N-terminal signal peptide occupies residues 1–21 (MTSLHSLAGLLLLMIIQSSWQ). 2 consecutive propeptides follow at residues 83-86 (NGLF) and glutamate 122.

The protein belongs to the glucagon family.

The protein localises to the secreted. Promotes hydrolysis of glycogen and lipids, and raises the blood sugar level. The polypeptide is Glucagon-2 (gcg2) (Lophius americanus (American angler)).